A 398-amino-acid chain; its full sequence is MQALVNQTQPINESIRDVDITNFGPTNLIIIQPTSYCNLDCDYCYLPDRHLKNHLPLDLLEPIMQAIFASPFTTSNFSLCWHAGEPLAAGLEFYRQAFAKIETYGEKYNHRQLWFDHSFQSNGILINQAWCDLFKQYPVHVGISLDGPAFLHDKHRKTRTGRGSHAATMRGIEWLQKNDICHSVIAVLTEESLDYPDEIFHFFRDHNLLDVGFNMEETEGINTESSLNKQGTLQKYRQFLERFWQLTSTSEPEFRVREFECLCNLIYTEDRLDHTDMNRPFAIVSIDHQGNFSTFDPELLAIKTPQYGDFIFGNVLTDSFASICQTEKFQRIYHDMTQGVEKCRQTCDYFGLCGGGAGSNKFWENGSFNSTETLACRFRIQQVAEVVIGALEESLGLA.

The Radical SAM core domain occupies 21–253 (TNFGPTNLII…WQLTSTSEPE (233 aa)). Cysteine 37, cysteine 41, and cysteine 44 together coordinate [4Fe-4S] cluster.

This sequence belongs to the radical SAM superfamily. Anaerobic sulfatase-maturating enzyme family. [4Fe-4S] cluster serves as cofactor.

This is an uncharacterized protein from Synechocystis sp. (strain ATCC 27184 / PCC 6803 / Kazusa).